A 114-amino-acid chain; its full sequence is Fumarate reductase subunit D (114 aa).

Helical transmembrane passes span Val24–Leu44, Leu50–Pro70, and Gly92–Ile112.

Belongs to the FrdD family. Part of an enzyme complex containing four subunits: a flavoprotein (FrdA), an iron-sulfur protein (FrdB), and two hydrophobic anchor proteins (FrdC and FrdD).

It is found in the cell inner membrane. Its function is as follows. Anchors the catalytic components of the fumarate reductase complex to the cell membrane, binds quinones. In Haemophilus influenzae (strain ATCC 51907 / DSM 11121 / KW20 / Rd), this protein is Fumarate reductase subunit D.